A 241-amino-acid polypeptide reads, in one-letter code: Cobalt transport protein CbiM (241 aa).

An N-terminal signal peptide occupies residues Met-1–Ala-24. 6 helical membrane-spanning segments follow: residues Gly-30 to Gly-50, Leu-67 to Val-87, Leu-99 to Phe-119, Thr-131 to Phe-151, Ser-160 to Leu-180, and Gly-202 to Val-222.

This sequence belongs to the CbiM family. Forms an energy-coupling factor (ECF) transporter complex composed of an ATP-binding protein (A component, CbiO), a transmembrane protein (T component, CbiQ) and 2 possible substrate-capture proteins (S components, CbiM and CbiN) of unknown stoichimetry.

The protein resides in the cell membrane. The protein operates within cofactor biosynthesis; adenosylcobalamin biosynthesis. Its function is as follows. Part of the energy-coupling factor (ECF) transporter complex CbiMNOQ involved in cobalt import. The protein is Cobalt transport protein CbiM of Acetoanaerobium sticklandii (strain ATCC 12662 / DSM 519 / JCM 1433 / CCUG 9281 / NCIMB 10654 / HF) (Clostridium sticklandii).